The sequence spans 305 residues: Flavin-dependent thymidylate synthase (305 aa).

Residues 50-261 (GFVRLIDYLG…PCATASFENH (212 aa)) enclose the ThyX domain. FAD is bound by residues Ser-96, 119-121 (RHR), and Glu-127. Residues 116–119 (QWMR), 127–131 (EVSSR), and Arg-200 contribute to the dUMP site. Residues 119-129 (RHRTARISEVS) carry the ThyX motif motif. FAD is bound by residues 216-218 (DLH) and His-222. DUMP is bound at residue Arg-227. The Involved in ionization of N3 of dUMP, leading to its activation role is filled by Arg-227.

The protein belongs to the thymidylate synthase ThyX family. In terms of assembly, homotetramer. The cofactor is FAD.

The catalysed reaction is dUMP + (6R)-5,10-methylene-5,6,7,8-tetrahydrofolate + NADPH + H(+) = dTMP + (6S)-5,6,7,8-tetrahydrofolate + NADP(+). It functions in the pathway pyrimidine metabolism; dTTP biosynthesis. Functionally, catalyzes the reductive methylation of 2'-deoxyuridine-5'-monophosphate (dUMP) to 2'-deoxythymidine-5'-monophosphate (dTMP) while utilizing 5,10-methylenetetrahydrofolate (mTHF) as the methyl donor, and NADPH and FADH(2) as the reductant. The chain is Flavin-dependent thymidylate synthase from Treponema pallidum (strain Nichols).